The primary structure comprises 222 residues: Peptide methionine sulfoxide reductase MsrA 1 (222 aa).

The active site involves Cys57.

It belongs to the MsrA Met sulfoxide reductase family.

It carries out the reaction L-methionyl-[protein] + [thioredoxin]-disulfide + H2O = L-methionyl-(S)-S-oxide-[protein] + [thioredoxin]-dithiol. The catalysed reaction is [thioredoxin]-disulfide + L-methionine + H2O = L-methionine (S)-S-oxide + [thioredoxin]-dithiol. In terms of biological role, has an important function as a repair enzyme for proteins that have been inactivated by oxidation. Catalyzes the reversible oxidation-reduction of methionine sulfoxide in proteins to methionine. The polypeptide is Peptide methionine sulfoxide reductase MsrA 1 (msrA1) (Synechocystis sp. (strain ATCC 27184 / PCC 6803 / Kazusa)).